Consider the following 239-residue polypeptide: MILYPAIDLKDGQAVRLVHGDMDRTTVFNDDPAAQARSFVAAGCTWLHLVDLNGAFAGEPVNAAPVEAILKACPVPAQLGGGIRDMATIERWLNKGLARVILGTVAVENPDLVREAARAFPDQVAVGIDARNGFVATKGWAEETDVQATDLAKSFEDAGVAAIIYTDILRDGAMGGPNTQATADLARAVSIPVIASGGVSSLDDLLALRDSGVISGAISGRALYDGAIDLAQALEALKT.

D8 (proton acceptor) is an active-site residue. D129 serves as the catalytic Proton donor.

This sequence belongs to the HisA/HisF family.

Its subcellular location is the cytoplasm. The enzyme catalyses 1-(5-phospho-beta-D-ribosyl)-5-[(5-phospho-beta-D-ribosylamino)methylideneamino]imidazole-4-carboxamide = 5-[(5-phospho-1-deoxy-D-ribulos-1-ylimino)methylamino]-1-(5-phospho-beta-D-ribosyl)imidazole-4-carboxamide. The protein operates within amino-acid biosynthesis; L-histidine biosynthesis; L-histidine from 5-phospho-alpha-D-ribose 1-diphosphate: step 4/9. The chain is 1-(5-phosphoribosyl)-5-[(5-phosphoribosylamino)methylideneamino] imidazole-4-carboxamide isomerase from Roseobacter denitrificans (strain ATCC 33942 / OCh 114) (Erythrobacter sp. (strain OCh 114)).